We begin with the raw amino-acid sequence, 78 residues long: uncharacterized protein (78 aa).

This is an uncharacterized protein from Escherichia coli.